A 102-amino-acid polypeptide reads, in one-letter code: UPF0328 protein ECU10_1820 (102 aa).

Belongs to the UPF0328 family.

The chain is UPF0328 protein ECU10_1820 from Encephalitozoon cuniculi (strain GB-M1) (Microsporidian parasite).